The following is a 314-amino-acid chain: 3'-5' exoribonuclease YhaM (314 aa).

The segment at residues 22–90 (SSTKGIASNG…QLKLRNIRPV (69 aa)) is a DNA-binding region (OB). In terms of domain architecture, HD spans 163–279 (HVVSMLNLAK…LHYIDNLDAK (117 aa)).

Belongs to the YhaM family. Mn(2+) is required as a cofactor. The cofactor is Co(2+).

Shows a 3'-5' exoribonuclease activity as well as single-stranded DNA 3'-5'exonuclease activity. Plays a role in the secondary pathway of 23S rRNA 3' end maturation. The polypeptide is 3'-5' exoribonuclease YhaM (Bacillus subtilis (strain 168)).